We begin with the raw amino-acid sequence, 164 residues long: Protein LIGHT-DEPENDENT SHORT HYPOCOTYLS 8 (164 aa).

An ALOG domain is found at 23–150; that stretch reads RYESQKSRDW…ARGVLYKKKK (128 aa). Positions 148 to 152 match the Nuclear localization signal motif; sequence KKKRL.

It belongs to the plant homeotic and developmental regulators ALOG protein family.

It is found in the nucleus. In terms of biological role, probable transcription regulator that acts as a developmental regulator by promoting cell growth in response to light. This is Protein LIGHT-DEPENDENT SHORT HYPOCOTYLS 8 (LSH8) from Arabidopsis thaliana (Mouse-ear cress).